A 376-amino-acid polypeptide reads, in one-letter code: MRKVNCIKVITRAHTLGYCGGVRMAVRMAEHARAHHRGSVYTLGPLVHNPVTLARLRARGIECLDPAHLSFALHAPAAPGAAPHAVEEKTARTVVIRAHGVAPEVYEALERSGAQVVDATCPRVKESQRRAQGFAAQGLHVILAGDRNHGEIVGIEGYVRAGAAQACSHLPGGAPDGMLPQVQCFVVQNAREAAALPCLARAALLAQTTITQGEYDAIAAAARTRVRELTVARTICAATARRQAALRALAPTVEALLVIGGAHSANTQRLLHTARETSLPTWLVERVEDIPPDIYAFSAVGISAGASTPDCVIAAVEQALRTGGAPVASRVSSSALPKVSTCRAVCAAATSSVGSAGASGAVSPGAVRPFAVGSVR.

[4Fe-4S] cluster is bound at residue C19. 2 residues coordinate (2E)-4-hydroxy-3-methylbut-2-enyl diphosphate: H48 and H99. The dimethylallyl diphosphate site is built by H48 and H99. Positions 48 and 99 each coordinate isopentenyl diphosphate. C121 is a binding site for [4Fe-4S] cluster. A (2E)-4-hydroxy-3-methylbut-2-enyl diphosphate-binding site is contributed by H149. Residue H149 coordinates dimethylallyl diphosphate. Residue H149 coordinates isopentenyl diphosphate. Catalysis depends on E151, which acts as the Proton donor. Residue T208 participates in (2E)-4-hydroxy-3-methylbut-2-enyl diphosphate binding. C236 is a [4Fe-4S] cluster binding site. (2E)-4-hydroxy-3-methylbut-2-enyl diphosphate is bound by residues S264, N266, and S307. Dimethylallyl diphosphate-binding residues include S264, N266, and S307. Isopentenyl diphosphate-binding residues include S264, N266, and S307.

It belongs to the IspH family. The cofactor is [4Fe-4S] cluster.

It catalyses the reaction isopentenyl diphosphate + 2 oxidized [2Fe-2S]-[ferredoxin] + H2O = (2E)-4-hydroxy-3-methylbut-2-enyl diphosphate + 2 reduced [2Fe-2S]-[ferredoxin] + 2 H(+). The catalysed reaction is dimethylallyl diphosphate + 2 oxidized [2Fe-2S]-[ferredoxin] + H2O = (2E)-4-hydroxy-3-methylbut-2-enyl diphosphate + 2 reduced [2Fe-2S]-[ferredoxin] + 2 H(+). Its pathway is isoprenoid biosynthesis; dimethylallyl diphosphate biosynthesis; dimethylallyl diphosphate from (2E)-4-hydroxy-3-methylbutenyl diphosphate: step 1/1. It functions in the pathway isoprenoid biosynthesis; isopentenyl diphosphate biosynthesis via DXP pathway; isopentenyl diphosphate from 1-deoxy-D-xylulose 5-phosphate: step 6/6. In terms of biological role, catalyzes the conversion of 1-hydroxy-2-methyl-2-(E)-butenyl 4-diphosphate (HMBPP) into a mixture of isopentenyl diphosphate (IPP) and dimethylallyl diphosphate (DMAPP). Acts in the terminal step of the DOXP/MEP pathway for isoprenoid precursor biosynthesis. In Treponema pallidum (strain Nichols), this protein is 4-hydroxy-3-methylbut-2-enyl diphosphate reductase.